A 453-amino-acid chain; its full sequence is MGSVLGLCSVASWIPCLCGSAPCLLCRCCPSGNNSTVTRLIYALFLLVGVCVACVMLIPGMEEQLNKIPGFCENEKGVVPCNILVGYKAVYRLCFGLAMFYLLLSLLMIKVKSSSDPRAAVHNGFWFFKFATAVAIIIGAFFIPEGTFTTVWFYVGMAGAFCFILIQLVLLIDFAHSWNESWVEKMEEGNSRCWYAALLSATALNYLLSLVAVVLFFVYYTHPASCAENKAFISVNMLLCIGASVMSILPKIQESQPRSGLLQSSVITVYTMYLTWSAMTNEPETNCNPSLLSIIGFNTTRPIPKDGQSVQWWHPQGIIGLVLFLLCVFYSSIRTSNNSQVNKLTLTSDESTLIEDGNGRSDGSLDDGDGIHRAVDNERDGVTYSYSFFHFMLFLASLYIMMTLTNWYRYEPSREMKSQWTAVWVKISSSWIGLVLYVWTLVAPLVLTNRDFD.

Gly2 carries N-myristoyl glycine lipidation. Residues 2 to 39 (GSVLGLCSVASWIPCLCGSAPCLLCRCCPSGNNSTVTR) are Cytoplasmic-facing. Residues 40-60 (LIYALFLLVGVCVACVMLIPG) traverse the membrane as a helical segment. The Lumenal portion of the chain corresponds to 61–88 (MEEQLNKIPGFCENEKGVVPCNILVGYK). A helical transmembrane segment spans residues 89–109 (AVYRLCFGLAMFYLLLSLLMI). Over 110-123 (KVKSSSDPRAAVHN) the chain is Cytoplasmic. A helical transmembrane segment spans residues 124 to 144 (GFWFFKFATAVAIIIGAFFIP). Topologically, residues 145–151 (EGTFTTV) are lumenal. The chain crosses the membrane as a helical span at residues 152-172 (WFYVGMAGAFCFILIQLVLLI). At 173-197 (DFAHSWNESWVEKMEEGNSRCWYAA) the chain is on the cytoplasmic side. A helical membrane pass occupies residues 198 to 218 (LLSATALNYLLSLVAVVLFFV). The Lumenal segment spans residues 219–231 (YYTHPASCAENKA). The chain crosses the membrane as a helical span at residues 232-252 (FISVNMLLCIGASVMSILPKI). The Cytoplasmic segment spans residues 253–259 (QESQPRS). A helical membrane pass occupies residues 260–280 (GLLQSSVITVYTMYLTWSAMT). Residues 281–309 (NEPETNCNPSLLSIIGFNTTRPIPKDGQS) lie on the Lumenal side of the membrane. A helical transmembrane segment spans residues 310-330 (VQWWHPQGIIGLVLFLLCVFY). Over 331-387 (SSIRTSNNSQVNKLTLTSDESTLIEDGNGRSDGSLDDGDGIHRAVDNERDGVTYSYS) the chain is Cytoplasmic. Position 351 is a phosphoserine (Ser351). Thr352 carries the post-translational modification Phosphothreonine. Phosphoserine occurs at positions 361 and 364. A helical transmembrane segment spans residues 388 to 408 (FFHFMLFLASLYIMMTLTNWY). The Lumenal portion of the chain corresponds to 409–426 (RYEPSREMKSQWTAVWVK). The chain crosses the membrane as a helical span at residues 427–447 (ISSSWIGLVLYVWTLVAPLVL). The Cytoplasmic segment spans residues 448–453 (TNRDFD).

Belongs to the TDE1 family. Interacts with SPTLC1. As to expression, highly expressed in the neuronal populations such as Purkinje cells in the cerebellum, brainstem and spinal motor neurons, locus coeruleus and raphe nuclei.

Its subcellular location is the endoplasmic reticulum membrane. Its function is as follows. Enhances the incorporation of serine into phosphatidylserine and sphingolipids. The chain is Serine incorporator 1 (Serinc1) from Mus musculus (Mouse).